The primary structure comprises 688 residues: Glycine--tRNA ligase beta subunit (688 aa).

This sequence belongs to the class-II aminoacyl-tRNA synthetase family. As to quaternary structure, tetramer of two alpha and two beta subunits.

It is found in the cytoplasm. It carries out the reaction tRNA(Gly) + glycine + ATP = glycyl-tRNA(Gly) + AMP + diphosphate. The polypeptide is Glycine--tRNA ligase beta subunit (Listeria monocytogenes serotype 4b (strain CLIP80459)).